Consider the following 62-residue polypeptide: Large ribosomal subunit protein uL29 (62 aa).

The protein belongs to the universal ribosomal protein uL29 family.

The polypeptide is Large ribosomal subunit protein uL29 (Syntrophotalea carbinolica (strain DSM 2380 / NBRC 103641 / GraBd1) (Pelobacter carbinolicus)).